A 440-amino-acid polypeptide reads, in one-letter code: MPKPVVAVVGRPNVGKSTFFNYLVGKRISIVEDTPGVTRDRIYAEVEWRNKKFTLIDTGGIEPYSEDKIMQQMKRQAEIAIETADIIIFMVDVKDGVTASDKEVATLLRKTKKPVIVAVNKVDKIGELPADFYEFYNLGFGELMAISSIHGLGMGDLLDEIFKYFPEEDAEDYDEDVIKVAVVGKPNVGKSSLINRILGEERVIVSDIPGTTRDAIDTFVENEHGKFVFIDTAGIRRQSKINEKIEKYSIIRSWTAIERADVCLILIDAKEGVTEQDTKIAGYAHEQGKASIIVVNKWDLIEKQTGTLEEYRRTVHEKLGFMLYAPVIFISALTGQRVDRIYGLIKHVADQAAMRISTGVLNDLLNEATAMVQPPSDKGKRLKIYYMTQSSVKPPSFVLFINNMELMHYSYERYLENQLRKSFGFEGTPIKFILREKEKE.

2 EngA-type G domains span residues 4 to 169 (PVVA…PEED) and 178 to 353 (IKVA…DQAA). Residues 10-17 (GRPNVGKS), 57-61 (DTGGI), 120-123 (NKVD), 184-191 (GKPNVGKS), 231-235 (DTAGI), and 296-299 (NKWD) each bind GTP. A KH-like domain is found at 354 to 438 (MRISTGVLND…PIKFILREKE (85 aa)).

The protein belongs to the TRAFAC class TrmE-Era-EngA-EngB-Septin-like GTPase superfamily. EngA (Der) GTPase family. Associates with the 50S ribosomal subunit.

In terms of biological role, GTPase that plays an essential role in the late steps of ribosome biogenesis. The chain is GTPase Der from Acetivibrio thermocellus (strain ATCC 27405 / DSM 1237 / JCM 9322 / NBRC 103400 / NCIMB 10682 / NRRL B-4536 / VPI 7372) (Clostridium thermocellum).